Here is a 791-residue protein sequence, read N- to C-terminus: Pleckstrin homology domain-containing family H member 3 (791 aa).

The first 18 residues, 1–18 (MPLPGGLWWLLCCRRGFT), serve as a signal peptide directing secretion. The segment covering 29–41 (LSGDGDEDEDDET) has biased composition (acidic residues). The interval 29-71 (LSGDGDEDEDDETFELRSPSPAGGGRGSLDVTLTQPTRNGPIT) is disordered. Ser30 is modified (phosphoserine). Residues 59 to 71 (VTLTQPTRNGPIT) are compositionally biased toward polar residues. A PH domain is found at 95-199 (DVIVKGWLYR…WGVALREVIA (105 aa)). The region spanning 237 to 399 (HTSSALYAPL…PSLAEISALS (163 aa)) is the MyTH4 domain. The FERM domain occupies 404-755 (LLCTVHCPGA…ANPSPERPCS (352 aa)). Residues 549 to 559 (PRGPLPLLDRL) show a composition bias toward low complexity. Disordered regions lie at residues 549–580 (PRGPLPLLDRLMPPPAPPREQPSRPARRPPPS) and 593–623 (LAKRRAERARRIGTGRSTESTAQVGGGGGGS). A compositionally biased stretch (basic residues) spans 594 to 605 (AKRRAERARRIG). Position 636 is an omega-N-methylarginine (Arg636). Residues 748–791 (PSPERPCSSSGPPSQDLSDTSPPSQHQVLEKPQGQSGCLRQLQD) are disordered. Residues 754–791 (CSSSGPPSQDLSDTSPPSQHQVLEKPQGQSGCLRQLQD) are compositionally biased toward polar residues.

The sequence is that of Pleckstrin homology domain-containing family H member 3 (Plekhh3) from Rattus norvegicus (Rat).